Reading from the N-terminus, the 130-residue chain is Type VII secretion system extracellular protein C (130 aa).

This sequence belongs to the EsxC family. In terms of assembly, forms both homodimers and heterodimers with EsxA. Homodimerization is calcium-dependent.

Its subcellular location is the secreted. The polypeptide is Type VII secretion system extracellular protein C (Staphylococcus aureus (strain USA300)).